The following is a 184-amino-acid chain: GTP cyclohydrolase 1 (184 aa).

Zn(2+)-binding residues include cysteine 74, histidine 77, and cysteine 145.

The protein belongs to the GTP cyclohydrolase I family. As to quaternary structure, toroid-shaped homodecamer, composed of two pentamers of five dimers.

It carries out the reaction GTP + H2O = 7,8-dihydroneopterin 3'-triphosphate + formate + H(+). It participates in cofactor biosynthesis; 7,8-dihydroneopterin triphosphate biosynthesis; 7,8-dihydroneopterin triphosphate from GTP: step 1/1. In Aquifex aeolicus (strain VF5), this protein is GTP cyclohydrolase 1 (folE).